The primary structure comprises 464 residues: Soluble pyridine nucleotide transhydrogenase (464 aa).

Asp-35–Cys-44 contacts FAD.

It belongs to the class-I pyridine nucleotide-disulfide oxidoreductase family. FAD is required as a cofactor.

The protein localises to the cytoplasm. It carries out the reaction NAD(+) + NADPH = NADH + NADP(+). Conversion of NADPH, generated by peripheral catabolic pathways, to NADH, which can enter the respiratory chain for energy generation. In Pseudomonas entomophila (strain L48), this protein is Soluble pyridine nucleotide transhydrogenase.